A 155-amino-acid polypeptide reads, in one-letter code: U4/U6.U5 small nuclear ribonucleoprotein 27 kDa protein (155 aa).

2 stretches are compositionally biased toward basic residues: residues 1–31 (MGRS…RERS) and 39–59 (RRSR…RHRS). The tract at residues 1–97 (MGRSRSRSPR…ITEEDLEGKT (97 aa)) is disordered. Phosphoserine occurs at positions 61 and 65. Positions 66–97 (RLKERRDEEKKETKETKSKERQITEEDLEGKT) are enriched in basic and acidic residues. Phosphoserine is present on residues Ser111, Ser114, and Ser132.

It belongs to the SNUT3 family. Part of a tri-snRNP complex. Post-translationally, phosphorylated in vitro by snRNP-associated protein kinase.

It is found in the nucleus. In terms of biological role, may play a role in mRNA splicing. This Homo sapiens (Human) protein is U4/U6.U5 small nuclear ribonucleoprotein 27 kDa protein (SNRNP27).